We begin with the raw amino-acid sequence, 430 residues long: Long-chain specific acyl-CoA dehydrogenase, mitochondrial (430 aa).

A mitochondrion-targeting transit peptide spans 1-30 (MAARLLRGSLRVLGGHRAPRQLPAARCSHS). Lys-42 bears the N6-acetyllysine mark. A Phosphoserine modification is found at Ser-54. N6-acetyllysine; alternate is present on residues Lys-66 and Lys-81. Lys-66 and Lys-81 each carry N6-succinyllysine; alternate. Residues Lys-92 and Lys-95 each carry the N6-acetyllysine modification. At Lys-165 the chain carries N6-succinyllysine. Residues 170–179 (IAMTEPGAGS) and 203–205 (FIS) contribute to the FAD site. Ser-179 contributes to the substrate binding site. 227–228 (AH) is a substrate binding site. Residue Lys-240 is modified to N6-succinyllysine. N6-acetyllysine; alternate occurs at positions 254 and 279. An N6-succinyllysine; alternate mark is found at Lys-254 and Lys-279. Substrate-binding positions include Tyr-282 and 289-292 (PQER). The Proton acceptor role is filled by Glu-291. Arg-317 contacts FAD. N6-acetyllysine is present on Lys-318. Lys-322 is modified (N6-acetyllysine; alternate). Lys-322 bears the N6-succinyllysine; alternate mark. Gln-328 is a binding site for FAD. Lys-358 bears the N6-acetyllysine mark. Residue Ser-362 is modified to Phosphoserine. 385–389 (QLHGG) serves as a coordination point for FAD. 412–413 (GG) provides a ligand contact to substrate. 414–416 (TNE) is a binding site for FAD.

It belongs to the acyl-CoA dehydrogenase family. As to quaternary structure, homotetramer. It depends on FAD as a cofactor. Post-translationally, acetylation at Lys-318 and Lys-322 in proximity of the cofactor-binding sites strongly reduces catalytic activity. These sites are deacetylated by SIRT3.

It is found in the mitochondrion matrix. It catalyses the reaction a long-chain 2,3-saturated fatty acyl-CoA + oxidized [electron-transfer flavoprotein] + H(+) = a long-chain (2E)-enoyl-CoA + reduced [electron-transfer flavoprotein]. It carries out the reaction hexanoyl-CoA + oxidized [electron-transfer flavoprotein] + H(+) = (2E)-hexenoyl-CoA + reduced [electron-transfer flavoprotein]. The enzyme catalyses octanoyl-CoA + oxidized [electron-transfer flavoprotein] + H(+) = (2E)-octenoyl-CoA + reduced [electron-transfer flavoprotein]. The catalysed reaction is decanoyl-CoA + oxidized [electron-transfer flavoprotein] + H(+) = (2E)-decenoyl-CoA + reduced [electron-transfer flavoprotein]. It catalyses the reaction dodecanoyl-CoA + oxidized [electron-transfer flavoprotein] + H(+) = (2E)-dodecenoyl-CoA + reduced [electron-transfer flavoprotein]. It carries out the reaction tetradecanoyl-CoA + oxidized [electron-transfer flavoprotein] + H(+) = (2E)-tetradecenoyl-CoA + reduced [electron-transfer flavoprotein]. The enzyme catalyses oxidized [electron-transfer flavoprotein] + hexadecanoyl-CoA + H(+) = (2E)-hexadecenoyl-CoA + reduced [electron-transfer flavoprotein]. The catalysed reaction is octadecanoyl-CoA + oxidized [electron-transfer flavoprotein] + H(+) = (2E)-octadecenoyl-CoA + reduced [electron-transfer flavoprotein]. It catalyses the reaction eicosanoyl-CoA + oxidized [electron-transfer flavoprotein] + H(+) = (2E)-eicosenoyl-CoA + reduced [electron-transfer flavoprotein]. It carries out the reaction docosanoyl-CoA + oxidized [electron-transfer flavoprotein] + H(+) = (2E)-docosenoyl-CoA + reduced [electron-transfer flavoprotein]. The enzyme catalyses tetracosanoyl-CoA + oxidized [electron-transfer flavoprotein] + H(+) = (2E)-tetracosenoyl-CoA + reduced [electron-transfer flavoprotein]. The catalysed reaction is (5E)-tetradecenoyl-CoA + oxidized [electron-transfer flavoprotein] + H(+) = (2E,5E)-tetradecadienoyl-CoA + reduced [electron-transfer flavoprotein]. It catalyses the reaction (5Z)-tetradecenoyl-CoA + oxidized [electron-transfer flavoprotein] + H(+) = (2E,5Z)-tetradecadienoyl-CoA + reduced [electron-transfer flavoprotein]. It carries out the reaction oxidized [electron-transfer flavoprotein] + (9Z)-octadecenoyl-CoA + H(+) = (2E,9Z)-octadecadienoyl-CoA + reduced [electron-transfer flavoprotein]. Its pathway is lipid metabolism; mitochondrial fatty acid beta-oxidation. Long-chain specific acyl-CoA dehydrogenase is one of the acyl-CoA dehydrogenases that catalyze the first step of mitochondrial fatty acid beta-oxidation, an aerobic process breaking down fatty acids into acetyl-CoA and allowing the production of energy from fats. The first step of fatty acid beta-oxidation consists in the removal of one hydrogen from C-2 and C-3 of the straight-chain fatty acyl-CoA thioester, resulting in the formation of trans-2-enoyl-CoA. Among the different mitochondrial acyl-CoA dehydrogenases, long-chain specific acyl-CoA dehydrogenase can act on saturated and unsaturated acyl-CoAs with 6 to 24 carbons with a preference for 8 to 18 carbons long primary chains. In Homo sapiens (Human), this protein is Long-chain specific acyl-CoA dehydrogenase, mitochondrial.